A 317-amino-acid chain; its full sequence is tRNA(Ile)-lysidine synthase (317 aa).

32 to 37 contacts ATP; it reads SGGVDS.

The protein belongs to the tRNA(Ile)-lysidine synthase family.

It is found in the cytoplasm. It catalyses the reaction cytidine(34) in tRNA(Ile2) + L-lysine + ATP = lysidine(34) in tRNA(Ile2) + AMP + diphosphate + H(+). Functionally, ligates lysine onto the cytidine present at position 34 of the AUA codon-specific tRNA(Ile) that contains the anticodon CAU, in an ATP-dependent manner. Cytidine is converted to lysidine, thus changing the amino acid specificity of the tRNA from methionine to isoleucine. This chain is tRNA(Ile)-lysidine synthase, found in Aquifex aeolicus (strain VF5).